The primary structure comprises 89 residues: Acylphosphatase (89 aa).

Positions 3–89 (ALFIKISGRV…QNFTSFDIVP (87 aa)) constitute an Acylphosphatase-like domain. Active-site residues include arginine 18 and asparagine 36.

It belongs to the acylphosphatase family.

The catalysed reaction is an acyl phosphate + H2O = a carboxylate + phosphate + H(+). The protein is Acylphosphatase (acyP) of Pseudothermotoga lettingae (strain ATCC BAA-301 / DSM 14385 / NBRC 107922 / TMO) (Thermotoga lettingae).